We begin with the raw amino-acid sequence, 286 residues long: MASLRDIKAKINSTKKTSQITKAMEMVSASKLNRAEQNAKSFVPYMEKIQEVVASIAQGSKGINHPMLNSRPVKRTGYIVITSDRGLAGGYNSNVLRTVSNVIRERHNMDSNQYSIIVLGRLGRDYLKRRGFNIIDEVVGLSDHPSFTDIKDIASRAIAMFADGAYDELYIYYNHYVSKISQEVTENKILPLTDVASDKPTTAYEFEPSEEEILKVLLPQYAESLVYGALLDGKASEHAARMTAMKSATDNAMEVIDSLTLSFNRARQAAITQEITEIVGGVAALE.

The protein belongs to the ATPase gamma chain family. F-type ATPases have 2 components, CF(1) - the catalytic core - and CF(0) - the membrane proton channel. CF(1) has five subunits: alpha(3), beta(3), gamma(1), delta(1), epsilon(1). CF(0) has three main subunits: a, b and c.

The protein resides in the cell membrane. In terms of biological role, produces ATP from ADP in the presence of a proton gradient across the membrane. The gamma chain is believed to be important in regulating ATPase activity and the flow of protons through the CF(0) complex. The sequence is that of ATP synthase gamma chain from Bacillus mycoides (strain KBAB4) (Bacillus weihenstephanensis).